The following is a 394-amino-acid chain: 2-aminobenzenesulfonate 2,3-dioxygenase subunit alpha (394 aa).

Positions 43–154 (WKFVCHVSEI…TETYLGLVFV (112 aa)) constitute a Rieske domain. Residues cysteine 85, histidine 87, cysteine 105, and histidine 108 each coordinate [2Fe-2S] cluster. The Fe cation site is built by histidine 209 and histidine 213.

The protein belongs to the bacterial ring-hydroxylating dioxygenase alpha subunit family. As to quaternary structure, heterotetramer with a alpha2beta2 structure. [2Fe-2S] cluster is required as a cofactor. It depends on Fe cation as a cofactor.

It carries out the reaction 2-aminobenzenesulfonate + NADH + O2 + 2 H(+) = 2,3-dihydroxybenzenesulfonate + NH4(+) + NAD(+). Inhibited by o-phenanthroline. Functionally, alpha subunit of the oxygenase component of the 2-aminobenzenesulfonate 2,3-dioxygenase system (deaminating) (ABSDOS). Can use 2-aminobenzenesulfonate (ABS), benzenesulfonate (BS), 4-toluenesulfonate (TS), 2-nitrobenzenesulfonate, 3- and 4-aminobenzenesulfonates, 4-chloro- and 4-hydroxybenzenesulfonates and pyridine-3-sulfonate as substrates. No desulfonation of ABS to aminocatechol or aminophenol detected. In Alcaligenes sp, this protein is 2-aminobenzenesulfonate 2,3-dioxygenase subunit alpha.